Here is a 225-residue protein sequence, read N- to C-terminus: DNA-binding response regulator MtrA (225 aa).

A Response regulatory domain is found at 4 to 117 (RILVVDDDAS…ELVARVRARL (114 aa)). At aspartate 53 the chain carries 4-aspartylphosphate. The segment at residues 125–224 (AEMLSIADVD…VRGVGYKAGP (100 aa)) is a DNA-binding region (ompR/PhoB-type).

In terms of processing, phosphorylated by MtrB.

Member of the two-component regulatory system MtrA/MtrB. In Mycobacterium leprae (strain TN), this protein is DNA-binding response regulator MtrA (mtrA).